A 500-amino-acid chain; its full sequence is Replication factor C large subunit (500 aa).

44 to 51 (GSPGVGKT) lines the ATP pocket. A disordered region spans residues 443–500 (HAADDLGASDGETTNASGTASSSGDDGDADGTTDGDGSDANDGNDDDDDGQAGLSDFV). The span at 455–466 (TTNASGTASSSG) shows a compositional bias: low complexity. A compositionally biased stretch (acidic residues) spans 467 to 492 (DDGDADGTTDGDGSDANDGNDDDDDG).

The protein belongs to the activator 1 small subunits family. RfcL subfamily. In terms of assembly, heteromultimer composed of small subunits (RfcS) and large subunits (RfcL).

Its function is as follows. Part of the RFC clamp loader complex which loads the PCNA sliding clamp onto DNA. The polypeptide is Replication factor C large subunit (Halorubrum lacusprofundi (strain ATCC 49239 / DSM 5036 / JCM 8891 / ACAM 34)).